Consider the following 160-residue polypeptide: Putative NrdI-like protein (160 aa).

The protein belongs to the NrdI family.

This is Putative NrdI-like protein from Streptococcus pyogenes serotype M1.